A 186-amino-acid polypeptide reads, in one-letter code: ATP synthase subunit delta (186 aa).

It belongs to the ATPase delta chain family. F-type ATPases have 2 components, F(1) - the catalytic core - and F(0) - the membrane proton channel. F(1) has five subunits: alpha(3), beta(3), gamma(1), delta(1), epsilon(1). CF(0) has four main subunits: a(1), b(1), b'(1) and c(10-14). The alpha and beta chains form an alternating ring which encloses part of the gamma chain. F(1) is attached to F(0) by a central stalk formed by the gamma and epsilon chains, while a peripheral stalk is formed by the delta, b and b' chains.

It is found in the cell inner membrane. In terms of biological role, f(1)F(0) ATP synthase produces ATP from ADP in the presence of a proton or sodium gradient. F-type ATPases consist of two structural domains, F(1) containing the extramembraneous catalytic core and F(0) containing the membrane proton channel, linked together by a central stalk and a peripheral stalk. During catalysis, ATP synthesis in the catalytic domain of F(1) is coupled via a rotary mechanism of the central stalk subunits to proton translocation. Its function is as follows. This protein is part of the stalk that links CF(0) to CF(1). It either transmits conformational changes from CF(0) to CF(1) or is implicated in proton conduction. In Rhodopseudomonas palustris (strain BisB18), this protein is ATP synthase subunit delta.